We begin with the raw amino-acid sequence, 1925 residues long: Plexin-D1 (1925 aa).

Positions methionine 1–leucine 21 are enriched in low complexity. The interval methionine 1 to histidine 26 is disordered. The first 48 residues, methionine 1–alanine 48, serve as a signal peptide directing secretion. One can recognise a Sema domain in the interval leucine 49–valine 548. Residues leucine 49 to alanine 1271 lie on the Extracellular side of the membrane. 2 disulfide bridges follow: cysteine 106–cysteine 116 and cysteine 142–cysteine 150. Asparagine 157 and asparagine 226 each carry an N-linked (GlcNAc...) asparagine glycan. 2 cysteine pairs are disulfide-bonded: cysteine 324–cysteine 447 and cysteine 347–cysteine 391. Asparagine 483 carries an N-linked (GlcNAc...) asparagine glycan. Cystine bridges form between cysteine 551/cysteine 568, cysteine 557/cysteine 602, cysteine 560/cysteine 577, cysteine 571/cysteine 583, and cysteine 639/cysteine 663. 3 consecutive IPT/TIG domains span residues proline 893–glutamine 977, proline 983–phenylalanine 1065, and proline 1071–glycine 1145. An N-linked (GlcNAc...) asparagine glycan is attached at asparagine 967. An N-linked (GlcNAc...) asparagine glycan is attached at asparagine 1120. The helical transmembrane segment at isoleucine 1272–valine 1292 threads the bilayer. The Cytoplasmic portion of the chain corresponds to phenylalanine 1293 to alanine 1925.

This sequence belongs to the plexin family. Interacts with NRP1 and SEMA4A. Interacts with SH3BP1; they dissociate upon SEMA3E binding to PLXND1 allowing SH3BP1 to transduce downstream signal through RAC1 inactivation. As to expression, detected in embryonic heart and vascular endothelium, brain, dorsal root ganglia, adrenal gland, lung mesenchyme, small intestine and in the ossification centers of vertebral bodies.

It is found in the cell membrane. The protein resides in the cell projection. Its subcellular location is the lamellipodium membrane. Its function is as follows. Cell surface receptor for SEMA4A and for class 3 semaphorins, such as SEMA3A, SEMA3C and SEMA3E. Plays an important role in cell-cell signaling, and in regulating the migration of a wide spectrum of cell types. Regulates the migration of thymocytes in the medulla. Regulates endothelial cell migration. Plays an important role in ensuring the specificity of synapse formation. Mediates anti-angiogenic signaling in response to SEMA3E. Required for normal development of the heart and vasculature. In Mus musculus (Mouse), this protein is Plexin-D1 (Plxnd1).